Consider the following 609-residue polypeptide: Laccase-1 (609 aa).

The signal sequence occupies residues 1–20 (MYLSTVLFPLLALNLGLSHA). Positions 45-141 (VFTNGEYPGP…DGQVGAMYIR (97 aa)) constitute a Plastocyanin-like 1 domain. A glycan (N-linked (GlcNAc...) asparagine) is linked at N75. Cu cation is bound by residues H79, H81, H123, and H125. An N-linked (GlcNAc...) asparagine glycan is attached at N257. In terms of domain architecture, Plastocyanin-like 2 spans 270 to 372 (TPSSVEPPVI…MSVYAILSYV (103 aa)). 3 N-linked (GlcNAc...) asparagine glycosylation sites follow: N403, N443, and N486. The region spanning 463–602 (STPLLFEPDP…MGGMALALLD (140 aa)) is the Plastocyanin-like 3 domain. The Cu cation site is built by H508, H511, and H513. Residues N531 and N546 are each glycosylated (N-linked (GlcNAc...) asparagine). Cu cation is bound by residues H585, C586, H587, and H591.

Belongs to the multicopper oxidase family. Cu cation is required as a cofactor.

It is found in the secreted. The catalysed reaction is 4 hydroquinone + O2 = 4 benzosemiquinone + 2 H2O. Functionally, required for the conversion of the yellow polyketide pigment synthesized by wA to the conidial green pigment. This is Laccase-1 (yA) from Emericella nidulans (strain FGSC A4 / ATCC 38163 / CBS 112.46 / NRRL 194 / M139) (Aspergillus nidulans).